Consider the following 454-residue polypeptide: Carbon catabolite repressor protein 4 homolog 5 (454 aa).

Residues methionine 1–glutamate 76 are disordered. Residues valine 31 to isoleucine 41 are compositionally biased toward basic and acidic residues. A compositionally biased stretch (basic residues) spans valine 61–lysine 75. Glutamate 153 is a binding site for Mg(2+).

The protein belongs to the CCR4/nocturin family. As to quaternary structure, component of the CCR4-NOT complex, at least composed of CRR4 and CAF1 proteins. The cofactor is Mg(2+).

It is found in the nucleus. The protein resides in the cytoplasm. It carries out the reaction Exonucleolytic cleavage of poly(A) to 5'-AMP.. Its function is as follows. Acts as a catalytic component of the CCR4-NOT core complex, which in the nucleus seems to be a general transcription factor, and in the cytoplasm the major mRNA deadenylase involved in mRNA turnover. The sequence is that of Carbon catabolite repressor protein 4 homolog 5 (CCR4-5) from Arabidopsis thaliana (Mouse-ear cress).